The chain runs to 1593 residues: ABC transporter C family member 8 (1593 aa).

The next 10 helical transmembrane spans lie at 27-47 (VVMT…LYYL), 75-95 (VIVS…IVSI), 100-120 (FEIL…GLVY), 135-155 (LYWV…TLAI), 169-189 (FSYF…VLFF), 280-300 (FYIA…GPTL), 318-338 (YDGL…SLLL), 392-412 (LCPY…SLVL), 419-439 (ASVF…LAIS), and 505-525 (LLLW…VYIL). Positions 280–561 (FYIAALFKII…LPSVVSSIIE (282 aa)) constitute an ABC transmembrane type-1 1 domain. Residues 594 to 818 (VKIDNATLEW…GSHFTELMSH (225 aa)) enclose the ABC transporter 1 domain. 627–634 (GQVGSGKS) provides a ligand contact to ATP. A disordered region spans residues 816–938 (MSHDEQQQQL…PLQKGEKSSV (123 aa)). The stretch at 844 to 875 (GDNKESENNEEQNEEEEGENENLLEKVLRKSR) forms a coiled coil. Residues 851 to 865 (NNEEQNEEEEGENEN) are compositionally biased toward acidic residues. The span at 877-886 (RSPSPSSNRN) shows a compositional bias: low complexity. A compositionally biased stretch (acidic residues) spans 905 to 922 (EEDEQDERELMEDIDIDG). 5 helical membrane passes run 1005-1025 (IGVL…LLSI), 1064-1084 (AKYY…ATFL), 1157-1177 (IIVI…VGAL), 1251-1271 (LAIR…LYTV), and 1280-1300 (GTAG…NWMV). Residues 1010-1308 (ATCIIGFYVL…MVRMSCDLEN (299 aa)) form the ABC transmembrane type-1 2 domain. The region spanning 1344 to 1578 (IVFKNLWLTY…QDSIYYSLVK (235 aa)) is the ABC transporter 2 domain. Residue 1378–1385 (GRTGAGKS) participates in ATP binding.

It belongs to the ABC transporter superfamily. ABCC family. Conjugate transporter (TC 3.A.1.208) subfamily.

The protein localises to the membrane. The sequence is that of ABC transporter C family member 8 (abcC8) from Dictyostelium discoideum (Social amoeba).